The sequence spans 159 residues: 2-C-methyl-D-erythritol 2,4-cyclodiphosphate synthase (159 aa).

Positions 8 and 10 each coordinate a divalent metal cation. Residues 8 to 10 and 34 to 35 each bind 4-CDP-2-C-methyl-D-erythritol 2-phosphate; these read DVH and HS. His42 is an a divalent metal cation binding site. 4-CDP-2-C-methyl-D-erythritol 2-phosphate is bound by residues 56 to 58, 61 to 65, 100 to 106, 132 to 135, Phe139, and Arg142; these read DIG, FPDTD, AQAPKML, and TTTE.

This sequence belongs to the IspF family. Homotrimer. The cofactor is a divalent metal cation.

It carries out the reaction 4-CDP-2-C-methyl-D-erythritol 2-phosphate = 2-C-methyl-D-erythritol 2,4-cyclic diphosphate + CMP. It functions in the pathway isoprenoid biosynthesis; isopentenyl diphosphate biosynthesis via DXP pathway; isopentenyl diphosphate from 1-deoxy-D-xylulose 5-phosphate: step 4/6. Its function is as follows. Involved in the biosynthesis of isopentenyl diphosphate (IPP) and dimethylallyl diphosphate (DMAPP), two major building blocks of isoprenoid compounds. Catalyzes the conversion of 4-diphosphocytidyl-2-C-methyl-D-erythritol 2-phosphate (CDP-ME2P) to 2-C-methyl-D-erythritol 2,4-cyclodiphosphate (ME-CPP) with a corresponding release of cytidine 5-monophosphate (CMP). The protein is 2-C-methyl-D-erythritol 2,4-cyclodiphosphate synthase of Salmonella dublin (strain CT_02021853).